We begin with the raw amino-acid sequence, 357 residues long: UDP-N-acetylglucosamine--N-acetylmuramyl-(pentapeptide) pyrophosphoryl-undecaprenol N-acetylglucosamine transferase (357 aa).

UDP-N-acetyl-alpha-D-glucosamine-binding positions include 14-16 (TGG), Asn126, Arg162, Ser190, Ile246, 265-270 (ALTVCE), and Gln290.

The protein belongs to the glycosyltransferase 28 family. MurG subfamily.

The protein localises to the cell inner membrane. It catalyses the reaction di-trans,octa-cis-undecaprenyl diphospho-N-acetyl-alpha-D-muramoyl-L-alanyl-D-glutamyl-meso-2,6-diaminopimeloyl-D-alanyl-D-alanine + UDP-N-acetyl-alpha-D-glucosamine = di-trans,octa-cis-undecaprenyl diphospho-[N-acetyl-alpha-D-glucosaminyl-(1-&gt;4)]-N-acetyl-alpha-D-muramoyl-L-alanyl-D-glutamyl-meso-2,6-diaminopimeloyl-D-alanyl-D-alanine + UDP + H(+). It functions in the pathway cell wall biogenesis; peptidoglycan biosynthesis. In terms of biological role, cell wall formation. Catalyzes the transfer of a GlcNAc subunit on undecaprenyl-pyrophosphoryl-MurNAc-pentapeptide (lipid intermediate I) to form undecaprenyl-pyrophosphoryl-MurNAc-(pentapeptide)GlcNAc (lipid intermediate II). The protein is UDP-N-acetylglucosamine--N-acetylmuramyl-(pentapeptide) pyrophosphoryl-undecaprenol N-acetylglucosamine transferase of Histophilus somni (strain 129Pt) (Haemophilus somnus).